Here is a 110-residue protein sequence, read N- to C-terminus: UPF0367 protein sync_2587 (110 aa).

It belongs to the UPF0367 family.

This Synechococcus sp. (strain CC9311) protein is UPF0367 protein sync_2587.